A 160-amino-acid polypeptide reads, in one-letter code: UPF0479 membrane protein YER190C-B (160 aa).

2 consecutive transmembrane segments (helical) span residues 39 to 59 and 136 to 156; these read IVFC…KVLQ and VPMI…ISQH.

It belongs to the UPF0479 family.

It localises to the membrane. The polypeptide is UPF0479 membrane protein YER190C-B (Saccharomyces cerevisiae (strain ATCC 204508 / S288c) (Baker's yeast)).